A 216-amino-acid polypeptide reads, in one-letter code: Probable RNA 2'-phosphotransferase 1 (216 aa).

This sequence belongs to the KptA/TPT1 family.

In terms of biological role, removes the 2'-phosphate from RNA via an intermediate in which the phosphate is ADP-ribosylated by NAD followed by a presumed transesterification to release the RNA and generate ADP-ribose 1''-2''-cyclic phosphate (APPR&gt;P). May function as an ADP-ribosylase. The protein is Probable RNA 2'-phosphotransferase 1 (kptA1) of Archaeoglobus fulgidus (strain ATCC 49558 / DSM 4304 / JCM 9628 / NBRC 100126 / VC-16).